Here is a 270-residue protein sequence, read N- to C-terminus: Glutamate racemase (270 aa).

Residues 14 to 15 and 46 to 47 contribute to the substrate site; these read DS and YG. Cysteine 77 functions as the Proton donor/acceptor in the catalytic mechanism. Residue 78-79 coordinates substrate; sequence NT. Catalysis depends on cysteine 189, which acts as the Proton donor/acceptor. 190 to 191 contributes to the substrate binding site; sequence TH.

It belongs to the aspartate/glutamate racemases family.

The catalysed reaction is L-glutamate = D-glutamate. It participates in cell wall biogenesis; peptidoglycan biosynthesis. Provides the (R)-glutamate required for cell wall biosynthesis. The polypeptide is Glutamate racemase (Neisseria gonorrhoeae (strain ATCC 700825 / FA 1090)).